The following is a 260-amino-acid chain: tRNA pseudouridine synthase A (260 aa).

Catalysis depends on Asp51, which acts as the Nucleophile. Tyr109 provides a ligand contact to substrate.

The protein belongs to the tRNA pseudouridine synthase TruA family. Homodimer.

The catalysed reaction is uridine(38/39/40) in tRNA = pseudouridine(38/39/40) in tRNA. In terms of biological role, formation of pseudouridine at positions 38, 39 and 40 in the anticodon stem and loop of transfer RNAs. In Methylibium petroleiphilum (strain ATCC BAA-1232 / LMG 22953 / PM1), this protein is tRNA pseudouridine synthase A.